Consider the following 297-residue polypeptide: Heterogeneous nuclear ribonucleoprotein D-like (297 aa).

Positions 1–21 are disordered; sequence MTGFGATPDFNEGSKINASKN. RRM domains are found at residues 26–108 and 111–190; these read GKMF…KGKE and KKVF…QPKE. The segment at 192–224 is disordered; sequence YRQQQQKQQKGGRGAATGRGGARGRGRGQGWNQ. Gly residues predominate over residues 202 to 222; that stretch reads GGRGAATGRGGARGRGRGQGW.

It localises to the nucleus. The protein localises to the cytoplasm. Its function is as follows. Acts as a transcriptional regulator. Binds DNA and RNA. The sequence is that of Heterogeneous nuclear ribonucleoprotein D-like (hnrnpdl) from Xenopus tropicalis (Western clawed frog).